The following is a 171-amino-acid chain: T-cell surface glycoprotein CD3 delta chain (171 aa).

Residues 1 to 21 (MEHSTFLSGLVLATLLSQVSP) form the signal peptide. The Extracellular segment spans residues 22-105 (FKIPVEELED…CVELDPATLA (84 aa)). An intrachain disulfide couples Cys37 to Cys73. Asn38, Asn54, and Asn74 each carry an N-linked (GlcNAc...) asparagine glycan. The helical transmembrane segment at 106–126 (GIIVTDVIATLLLALGVFCFA) threads the bilayer. Residues 127 to 171 (GHETGRLSGAADTQALLRNDQVYQPLRDRDDAQYSRLGGNWARNK) lie on the Cytoplasmic side of the membrane. Positions 138-166 (DTQALLRNDQVYQPLRDRDDAQYSRLGGN) constitute an ITAM domain. Residues Tyr149 and Tyr160 each carry the phosphotyrosine modification.

The TCR-CD3 complex is composed of a CD3D/CD3E and a CD3G/CD3E heterodimers that preferentially associate with TCRalpha and TCRbeta, respectively, to form TCRalpha/CD3E/CD3G and TCRbeta/CD3G/CD3E trimers. In turn, the hexamer interacts with CD3Z homodimer to form the TCR-CD3 complex. Alternatively, TCRalpha and TCRbeta can be replaced by TCRgamma and TCRdelta. Interacts with coreceptors CD4 and CD8. Post-translationally, phosphorylated on Tyr residues after T-cell receptor triggering by LCK in association with CD4/CD8. CD3D is mostly present on T-lymphocytes with its TCR-CD3 partners. Present also in fetal NK-cells.

It localises to the cell membrane. Functionally, part of the TCR-CD3 complex present on T-lymphocyte cell surface that plays an essential role in adaptive immune response. When antigen presenting cells (APCs) activate T-cell receptor (TCR), TCR-mediated signals are transmitted across the cell membrane by the CD3 chains CD3D, CD3E, CD3G and CD3Z. All CD3 chains contain immunoreceptor tyrosine-based activation motifs (ITAMs) in their cytoplasmic domain. Upon TCR engagement, these motifs become phosphorylated by Src family protein tyrosine kinases LCK and FYN, resulting in the activation of downstream signaling pathways. In addition of this role of signal transduction in T-cell activation, CD3D plays an essential role in thymocyte differentiation. Indeed, participates in correct intracellular TCR-CD3 complex assembly and surface expression. In absence of a functional TCR-CD3 complex, thymocytes are unable to differentiate properly. Interacts with CD4 and CD8 and thus serves to establish a functional link between the TCR and coreceptors CD4 and CD8, which is needed for activation and positive selection of CD4 or CD8 T-cells. The protein is T-cell surface glycoprotein CD3 delta chain (CD3D) of Macaca fascicularis (Crab-eating macaque).